The following is a 117-amino-acid chain: Minor capsid protein p17 (117 aa).

N12 carries an N-linked (GlcNAc...) asparagine; by host glycan. Residues 39 to 59 (AILLGILILLVIILIIVAIVY) traverse the membrane as a helical segment. Residues N61 and N97 are each glycosylated (N-linked (GlcNAc...) asparagine; by host).

This sequence belongs to the asfivirus minor capsid protein p17 family. Interacts with the minor capsid protein M1249L and with the hexon capsid protein p72 capsomers; these interactions form a rigid zipper structure that stabilizes the capsomers. Interacts with host STING1.

Its subcellular location is the virion membrane. The protein localises to the host endoplasmic reticulum membrane. It is found in the host Golgi apparatus membrane. In terms of biological role, together with the penton and the other minor capsid proteins (M1249L, p49), forms a complicated network immediately below the outer capsid shell, stabilizing the whole capsid. Three copies of p17 encircle each p72 capsomer in the inner capsid shell, anchoring p72 capsomers on the inner membrane. Required for the assembly of the capsid and icosahedral morphogenesis. Additionally, inhibits the host cGAS-STING pathway through its interaction with STING1 and subsequent interference of the recruitment of downstream components TBK1 and IKBKE. This African swine fever virus (strain Badajoz 1971 Vero-adapted) (Ba71V) protein is Minor capsid protein p17.